A 106-amino-acid chain; its full sequence is Urease subunit beta (106 aa).

Belongs to the urease beta subunit family. In terms of assembly, heterotrimer of UreA (gamma), UreB (beta) and UreC (alpha) subunits. Three heterotrimers associate to form the active enzyme.

It is found in the cytoplasm. It catalyses the reaction urea + 2 H2O + H(+) = hydrogencarbonate + 2 NH4(+). It participates in nitrogen metabolism; urea degradation; CO(2) and NH(3) from urea (urease route): step 1/1. The chain is Urease subunit beta from Prochlorococcus marinus (strain MIT 9301).